We begin with the raw amino-acid sequence, 73 residues long: MQKLTILLLVAAVLLSTQALNQEKRPKEMINVLSKGKTNAERRKRQCEDVWMPCTSNWECCSLDCEMYCTQIG.

The signal sequence occupies residues 1–19 (MQKLTILLLVAAVLLSTQA). A propeptide spanning residues 20–41 (LNQEKRPKEMINVLSKGKTNAE) is cleaved from the precursor. Gln-46 is modified (pyrrolidone carboxylic acid). Disulfide bonds link Cys-47-Cys-61, Cys-54-Cys-65, and Cys-60-Cys-69. Ile-72 carries the post-translational modification Isoleucine amide.

The protein belongs to the conotoxin O2 superfamily. As to expression, expressed by the venom duct.

The protein localises to the secreted. In Conus marmoreus (Marble cone), this protein is Conotoxin MaI51.